The chain runs to 125 residues: MKQEYKLKMLESEIRKVLSEALMEMKDPNIDPMKSLITISRVEVSKDKRYADVYVSVLGDEAKRKDVVNYFEQKKGYFRTYVAKNIRMYTAPELRFKEDKGIEATVRIGQLLDSIKESQKGDDNK.

Belongs to the RbfA family. In terms of assembly, monomer. Binds 30S ribosomal subunits, but not 50S ribosomal subunits or 70S ribosomes.

The protein resides in the cytoplasm. In terms of biological role, one of several proteins that assist in the late maturation steps of the functional core of the 30S ribosomal subunit. Associates with free 30S ribosomal subunits (but not with 30S subunits that are part of 70S ribosomes or polysomes). Required for efficient processing of 16S rRNA. May interact with the 5'-terminal helix region of 16S rRNA. This is Ribosome-binding factor A from Fervidobacterium nodosum (strain ATCC 35602 / DSM 5306 / Rt17-B1).